Reading from the N-terminus, the 791-residue chain is Sphingomyelin phosphodiesterase 4 (791 aa).

The helical transmembrane segment at 755-775 (LFALLSFGLFSSTGLILIISF) threads the bilayer.

Mg(2+) serves as cofactor.

The protein resides in the endoplasmic reticulum membrane. Its subcellular location is the golgi apparatus membrane. It localises to the nucleus envelope. The protein localises to the cell membrane. It is found in the sarcolemma. The enzyme catalyses a sphingomyelin + H2O = phosphocholine + an N-acylsphing-4-enine + H(+). Its function is as follows. Catalyzes the hydrolysis of membrane sphingomyelin to form phosphorylcholine and ceramide. It has a relevant role in the homeostasis of membrane sphingolipids, thereby influencing membrane integrity, and endoplasmic reticulum organization and function. May sensitize cells to DNA damage-induced apoptosis. The sequence is that of Sphingomyelin phosphodiesterase 4 (smpd4) from Danio rerio (Zebrafish).